Reading from the N-terminus, the 115-residue chain is MSFRNIHYFLLLIVIAVPLGKYLYVAFFEKGKIDRFFSPIEAVIYRLSGIRSLEEMTWKSYCTALLIVNAALLGISYGLLRIQHYLPLNGAKVENMEPTLTFNTVVSFMTNTNLQ.

2 consecutive transmembrane segments (helical) span residues 8-28 and 60-80; these read YFLL…VAFF and SYCT…YGLL.

This sequence belongs to the KdpA family. The system is composed of three essential subunits: KdpA, KdpB and KdpC.

It is found in the cell membrane. In terms of biological role, part of the high-affinity ATP-driven potassium transport (or Kdp) system, which catalyzes the hydrolysis of ATP coupled with the electrogenic transport of potassium into the cytoplasm. This subunit binds the extracellular potassium ions and delivers the ions to the membrane domain of KdpB through an intramembrane tunnel. The polypeptide is Potassium-transporting ATPase potassium-binding subunit (Geobacillus stearothermophilus (Bacillus stearothermophilus)).